The following is a 193-amino-acid chain: dCTP deaminase (193 aa).

Residues 110–115 (RSSLAR), D128, 136–138 (VLE), Y171, K178, and Q182 contribute to the dCTP site. Residue E138 is the Proton donor/acceptor of the active site. The interval 174–193 (RKSAKYKDQQEAVASRISQD) is disordered.

The protein belongs to the dCTP deaminase family. As to quaternary structure, homotrimer.

The enzyme catalyses dCTP + H2O + H(+) = dUTP + NH4(+). It functions in the pathway pyrimidine metabolism; dUMP biosynthesis; dUMP from dCTP (dUTP route): step 1/2. Its function is as follows. Catalyzes the deamination of dCTP to dUTP. This chain is dCTP deaminase, found in Shewanella baltica (strain OS223).